The sequence spans 320 residues: Glutaminyl-peptide cyclotransferase (320 aa).

Over residues 1–12 (MATRSPYKRQTK) the composition is skewed to basic residues. The segment at 1 to 22 (MATRSPYKRQTKRSMIQSLPAS) is disordered. Residues 1–36 (MATRSPYKRQTKRSMIQSLPASSSASSRRRFISRKR) are Cytoplasmic-facing. A helical; Signal-anchor for type II membrane protein membrane pass occupies residues 37–57 (FAMMIPLALLSGAVFLFFMPF). The Lumenal portion of the chain corresponds to 58–320 (NSWGQSSGSS…GNYIEQQCLV (263 aa)). N-linked (GlcNAc...) asparagine glycosylation is found at Asn-99 and Asn-163.

This sequence belongs to the plant glutaminyl-peptide cyclotransferase family. Glycosylated.

Its subcellular location is the endoplasmic reticulum membrane. The enzyme catalyses N-terminal L-glutaminyl-[peptide] = N-terminal 5-oxo-L-prolyl-[peptide] + NH4(+). Its function is as follows. Converts glutamine and N-terminal glutamyl residues in peptides to 5-oxoproline and 5-oxoproline residues. Not involved in the major pathway for 5-oxoproline production. This is Glutaminyl-peptide cyclotransferase (QCT) from Arabidopsis thaliana (Mouse-ear cress).